The chain runs to 142 residues: MELRAFCVILLITFLAVSSQAAKNKKEKGKKGASDCTEWTWGRCIPNSKDCGAGTREGTCKEETRKLKCKIPCNWKKAFGADCKYKFENWGECNATTGQKVRSGTLKKALYNADCQQTVEATKPCSLKTKSKSKGKKGKGKE.

A signal peptide spans 1 to 21 (MELRAFCVILLITFLAVSSQA). 5 cysteine pairs are disulfide-bonded: cysteine 36-cysteine 60, cysteine 44-cysteine 69, cysteine 51-cysteine 73, cysteine 83-cysteine 115, and cysteine 93-cysteine 125.

The protein belongs to the pleiotrophin family.

It localises to the secreted. Secreted protein that functions as a cytokine and growth factor and mediates its signal through cell-surface proteoglycan and non-proteoglycan receptors. Binds cell-surface proteoglycan receptors via their chondroitin sulfate (CS) groups. Thereby regulates many processes like inflammatory response, cell proliferation, cell adhesion, cell growth, cell survival, tissue regeneration, cell differentiation and cell migration. Inhibits mesoderm formation and promotes neural formation during development. Plays a role in development of the neuromuscular junction (NMJ). Has antibacterial activity against both Gram-positive and Gram-negative bacteria. The protein is Midkine of Xenopus tropicalis (Western clawed frog).